Reading from the N-terminus, the 249-residue chain is Segregation and condensation protein A (249 aa).

The protein belongs to the ScpA family. In terms of assembly, component of a cohesin-like complex composed of ScpA, ScpB and the Smc homodimer, in which ScpA and ScpB bind to the head domain of Smc. The presence of the three proteins is required for the association of the complex with DNA.

Its subcellular location is the cytoplasm. In terms of biological role, participates in chromosomal partition during cell division. May act via the formation of a condensin-like complex containing Smc and ScpB that pull DNA away from mid-cell into both cell halves. This Listeria innocua serovar 6a (strain ATCC BAA-680 / CLIP 11262) protein is Segregation and condensation protein A.